Consider the following 719-residue polypeptide: Transcription factor E4F1 (719 aa).

Residues 20-63 (NIITIQTTLGDEDEDIHKCGKCLAEFSALDAFIQHKLSRSCKRT) form a required for ubiquitin ligase activity region. The tract at residues 59–125 (SCKRTQDPQT…SEDESSSPSK (67 aa)) is disordered. Residues 98–109 (EKQDAKVASGDK) show a composition bias toward basic and acidic residues. The mediates dimerization and DNA-binding stretch occupies residues 128–207 (WKLNTEGRYV…GLAFRESGAL (80 aa)). C2H2-type zinc fingers lie at residues 136 to 158 (YVCDICAKTFKTTNILRTHMFTH) and 164 to 186 (FVCEMCETAFRTKGSLIRHKRRH). The segment at 192-216 (YRCNQCGLAFRESGALTRHLKSLTP) adopts a C2H2-type 3; degenerate zinc-finger fold. C2H2-type zinc fingers lie at residues 365–387 (YKCPHCERMFKTLNYLRVHVKGH), 393–415 (FKCLTCQKEFLTGYVLKKHMETH), 421–443 (YKCGECGKQFKAIGHVREHMRAH), 449–471 (YHCSFCDKSYKTKNALQVHHRTH), and 477–499 (YVCQHCSRGFREKSALVRHIRHH). The C2H2-type 9; degenerate zinc-finger motif lies at 505–527 (FKCSKCGRGFAEHGTLNRHLRAK).

The protein resides in the nucleus. It is found in the nucleoplasm. Its subcellular location is the cytoplasm. It catalyses the reaction S-ubiquitinyl-[E2 ubiquitin-conjugating enzyme]-L-cysteine + [acceptor protein]-L-lysine = [E2 ubiquitin-conjugating enzyme]-L-cysteine + N(6)-ubiquitinyl-[acceptor protein]-L-lysine.. It functions in the pathway protein modification; protein ubiquitination. In terms of biological role, may function as a transcriptional repressor. May also function as a ubiquitin ligase. Functions in cell survival and proliferation through control of the cell cycle. The chain is Transcription factor E4F1 (e4f1) from Danio rerio (Zebrafish).